Consider the following 373-residue polypeptide: Coiled-coil domain-containing protein 34 (373 aa).

2 disordered regions span residues 1 to 112 (MWAA…SLRG) and 118 to 137 (CAST…QVRL). Ser52 carries the post-translational modification Phosphoserine. Positions 61-76 (NSTRSLLSPLGHQSFQ) are enriched in polar residues. The segment covering 77 to 101 (FDEDDGDGEDEEDVDDEEDVDEDAH) has biased composition (acidic residues). Residues 152-286 (KEKEERDRLQ…QEWLENAKHK (135 aa)) adopt a coiled-coil conformation. Positions 324-352 (IHMPPPKEAKDLSGRKSKRPVISQPHKSS) are disordered. Basic and acidic residues predominate over residues 328 to 337 (PPKEAKDLSG).

As to expression, expressed in sperm.

The protein localises to the cell projection. Its subcellular location is the cilium. The protein resides in the flagellum. In terms of biological role, involved in spermatogenesis. Has a probable role in anterograde intraflagellar transport which is essential for the formation of sperm flagella. The protein is Coiled-coil domain-containing protein 34 (CCDC34) of Homo sapiens (Human).